A 184-amino-acid chain; its full sequence is Nucleoside triphosphate pyrophosphatase (184 aa).

Asp66 (proton acceptor) is an active-site residue.

This sequence belongs to the Maf family. A divalent metal cation serves as cofactor.

The protein localises to the cytoplasm. The catalysed reaction is a ribonucleoside 5'-triphosphate + H2O = a ribonucleoside 5'-phosphate + diphosphate + H(+). It carries out the reaction a 2'-deoxyribonucleoside 5'-triphosphate + H2O = a 2'-deoxyribonucleoside 5'-phosphate + diphosphate + H(+). In terms of biological role, nucleoside triphosphate pyrophosphatase. May have a dual role in cell division arrest and in preventing the incorporation of modified nucleotides into cellular nucleic acids. This is Nucleoside triphosphate pyrophosphatase from Prochlorococcus marinus (strain MIT 9313).